Here is a 505-residue protein sequence, read N- to C-terminus: Trans-cinnamate 4-monooxygenase (505 aa).

Residues 3-23 (LILLEKSLLAVFFAVIFSIIV) traverse the membrane as a helical segment. (E)-cinnamate-binding positions include 213–218 (RSRLAQ) and Ala-306. Position 447 (Cys-447) interacts with heme.

Belongs to the cytochrome P450 family. Heme is required as a cofactor. Mostly expressed in stems, and, to a lower extent, in bulbs, roots, leaves and flowers.

It is found in the membrane. The enzyme catalyses (E)-cinnamate + reduced [NADPH--hemoprotein reductase] + O2 = (E)-4-coumarate + oxidized [NADPH--hemoprotein reductase] + H2O + H(+). Its pathway is alkaloid biosynthesis. It functions in the pathway phenylpropanoid metabolism; trans-4-coumarate biosynthesis; trans-4-coumarate from trans-cinnamate: step 1/1. Its function is as follows. Catalyzes the first oxidative step of the phenylpropanoid pathway in higher plants by transforming trans-cinnamate into p-coumarate. The compounds formed by this pathway are essential components for lignification, pollination, and defense against ultraviolet light, predators and pathogens. Trans-4-coumarate is a precursor to all amaryllidaceae alkaloids such as galanthamine, lycorine and haemanthamine, and including haemanthamine- and crinamine-type alkaloids, promising anticancer agents. This Narcissus pseudonarcissus (Daffodil) protein is Trans-cinnamate 4-monooxygenase.